The following is a 1651-amino-acid chain: MKWKHLPLLVMISLLTLSKKHLLLAQLIPDPEDLERGNDNGTPAPTSDNDDNSLGYTGSRLRQEDFPPRIVEHPSDLIVSKGEPATLNCKAEGRPTPTIEWYKGGERVETDKDDPRSHRMLLPSGSLFFLRIVHGRKSRPDEGVYICVARNYLGEAVSHNASLEVAILRDDFRQNPSDVMVAVGEPAVMECQPPRGHPEPTISWKKDGSPLDDKDERITIRGGKLMITYTRKSDAGKYVCVGTNMVGERESKVADVTVLERPSFVKRPSNLAVTVDDSAEFKCEARGDPVPTFGWRKDDGELPKSRYEIRDDHTLKIRKVTAGDMGSYTCVAENMVGKAEASATLTVQEPPHFVVKPRDQVVALGRTVTFQCEATGNPQPAIFWRREGSQNLLFSYQPPQSSSRFSVSQTGDLTVTNVQRSDVGYYICQTLNVAGSIITKAYLEVTDVIADRPPPVIRQGPVNQTVAVDGTLTLSCVATGSPVPTILWRKDGVLVSTQDSRIKQLESGVLQIRYAKLGDTGRYTCTASTPSGEATWSAYIEVQEFGVPVQPPRPTDPNLIPSAPSKPEVTDVSKNTVTLLWQPNLNSGATPTSYIIEAFSHASGSSWQTVAENVKTETFAIKGLKPNAIYLFLVRAANAYGISDPSQISDPVKTQDVPPTTQGVDHKQVQRELGNVVLHLHNPTILSSSSVEVHWTVDQQSQYIQGYKILYRPSGASHGESEWLVFEVRTPTKNSVVIPDLRKGVNYEIKARPFFNEFQGADSEIKFAKTLEERPSAPPRSVTVSKNDGNGTAILVTWQPPPEDTQNGMVQEYKVWCLGNETRYHINKTVDGSTFSVVIPFLVPGIRYSVEVAASTGAGPGVKSEPQFIQLDSHGNPVSPEDQVSLAQQISDVVKQPAFIAGIGAACWIILMVFSIWLYRHRKKRNGLSSTYAGIRKVPSFTFTPTVTYQRGGEAVSSGGRPGLLNISEPATQPWLADTWPNTGNSHNDCSINCCTASNGNSDSNLTTYSRPADCIANYNNQLDNKQTNLMLPESTVYGDVDLSNKINEMKTFNSPNLKDGRFVNPSGQPTPYATTQLIQANLINNMNNGGGDSSEKHWKPPGQQKQEVAPIQYNIMEQNKLNKDYRANDTILPTIPYNHSYDQNTGGSYNSSDRGSSTSGSQGHKKGARTPKAPKQGGMNWADLLPPPPAHPPPHSNSEEYSMSVDESYDQEMPCPVPPARMYLQQDELEEEEAERGPTPPVRGAASSPAAVSYSHQSTATLTPSPQEELQPMLQDCPEDLGHMPHPPDRRRQPVSPPPPPRPISPPHTYGYISGPLVSDMDTDAPEEEEDEADMEVAKMQTRRLLLRGLEQTPASSVGDLESSVTGSMINGWGSASEEDNISSGRSSVSSSDGSFFTDADFAQAVAAAAEYAGLKVARRQMQDAAGRRHFHASQCPRPTSPVSTDSNMSAAVIQKARPTKKQKHQPGHLRREAYTDDLPPPPVPPPAIKSPSVQSKAQLEARPIMGPKLASIEARADRSSDRKGGSYKGREALDGRQVTDLRTSPGDPREAQEQPNEGKARGTKTAKRDLPPAKTHLIPEDILPYCRPTFPTSNNPRDPSSSSSMSSRGSGSRQREQANVGRRNMAEMQVLGGFERGDENNEELEETES.

The N-terminal stretch at methionine 1–alanine 25 is a signal peptide. Residues glutamine 26–proline 897 lie on the Extracellular side of the membrane. The disordered stretch occupies residues proline 31–phenylalanine 66. Residues aspartate 39 to tyrosine 56 are compositionally biased toward polar residues. Ig-like C2-type domains are found at residues proline 68–glutamate 164, aspartate 170–threonine 257, proline 262–threonine 346, proline 351–threonine 446, and proline 455–glutamate 541. A disulfide bridge connects residues cysteine 89 and cysteine 147. An N-linked (GlcNAc...) asparagine glycan is attached at asparagine 160. 3 cysteine pairs are disulfide-bonded: cysteine 191/cysteine 240, cysteine 283/cysteine 330, and cysteine 372/cysteine 428. A glycan (N-linked (GlcNAc...) asparagine) is linked at asparagine 463. Cysteine 476 and cysteine 525 are oxidised to a cystine. 3 consecutive Fibronectin type-III domains span residues alanine 563 to valine 657, valine 676 to glutamate 773, and proline 778 to histidine 874. Asparagine 790, asparagine 820, and asparagine 827 each carry an N-linked (GlcNAc...) asparagine glycan. Residues alanine 898–leucine 918 form a helical membrane-spanning segment. Residues tyrosine 919 to serine 1651 lie on the Cytoplasmic side of the membrane. Serine 940 is subject to Phosphoserine. Position 948 is a phosphothreonine (threonine 948). The residue at position 1038 (tyrosine 1038) is a Phosphotyrosine. At serine 1055 the chain carries Phosphoserine. Tyrosine 1073 carries the post-translational modification Phosphotyrosine. The tract at residues asparagine 1086 to glutamine 1107 is disordered. A Phosphotyrosine modification is found at tyrosine 1114. Disordered regions lie at residues proline 1137–glutamate 1337, glutamate 1352–phenylalanine 1397, and arginine 1420–serine 1651. Residues glycine 1147–glutamine 1163 show a composition bias toward low complexity. Residues leucine 1186–histidine 1196 are compositionally biased toward pro residues. The residue at position 1240 (threonine 1240) is a Phosphothreonine. A compositionally biased stretch (polar residues) spans tyrosine 1255–glutamate 1269. Residues aspartate 1281–arginine 1293 show a composition bias toward basic and acidic residues. The segment covering valine 1296–proline 1307 has biased composition (pro residues). Serine 1297 is subject to Phosphoserine. Residues methionine 1322–methionine 1336 show a composition bias toward acidic residues. Positions serine 1384–phenylalanine 1397 are enriched in low complexity. Over residues proline 1438–serine 1451 the composition is skewed to polar residues. The segment covering arginine 1459–histidine 1470 has biased composition (basic residues). A compositionally biased stretch (pro residues) spans leucine 1480–isoleucine 1490. Composition is skewed to basic and acidic residues over residues alanine 1516–threonine 1541 and aspartate 1549–proline 1573. The segment covering phenylalanine 1592–proline 1601 has biased composition (polar residues). Residues serine 1602–serine 1614 show a composition bias toward low complexity. Residues asparagine 1642–serine 1651 are compositionally biased toward acidic residues.

This sequence belongs to the immunoglobulin superfamily. ROBO family. Homodimer. Dimerization is mediated by the extracellular domain and is independent of SLIT liganding. Interacts with SLIT1. Interacts with SLIT2. Interacts with FLRT3. Interacts with MYO9B (via Rho-GAP domain). Post-translationally, ubiquitinated. May be deubiquitinated by USP33. Expressed in embryonal brain and spinal cord.

The protein localises to the cell membrane. It is found in the cell projection. The protein resides in the axon. It localises to the endoplasmic reticulum-Golgi intermediate compartment membrane. In terms of biological role, receptor for SLIT1 and SLIT2 that mediates cellular responses to molecular guidance cues in cellular migration, including axonal navigation at the ventral midline of the neural tube and projection of axons to different regions during neuronal development. Interaction with the intracellular domain of FLRT3 mediates axon attraction towards cells expressing NTN1. In axon growth cones, the silencing of the attractive effect of NTN1 by SLIT2 may require the formation of a ROBO1-DCC complex. Plays a role in the regulation of cell migration via its interaction with MYO9B; inhibits MYO9B-mediated stimulation of RHOA GTPase activity, and thereby leads to increased levels of active, GTP-bound RHOA. May be required for lung development. This is Roundabout homolog 1 (Robo1) from Rattus norvegicus (Rat).